Consider the following 381-residue polypeptide: Succinyl-diaminopimelate desuccinylase (381 aa).

Position 68 (His-68) interacts with Zn(2+). Asp-70 is an active-site residue. Residue Asp-101 participates in Zn(2+) binding. The active-site Proton acceptor is the Glu-135. 3 residues coordinate Zn(2+): Glu-136, Glu-164, and His-350.

This sequence belongs to the peptidase M20A family. DapE subfamily. In terms of assembly, homodimer. Zn(2+) serves as cofactor. Requires Co(2+) as cofactor.

The catalysed reaction is N-succinyl-(2S,6S)-2,6-diaminopimelate + H2O = (2S,6S)-2,6-diaminopimelate + succinate. It functions in the pathway amino-acid biosynthesis; L-lysine biosynthesis via DAP pathway; LL-2,6-diaminopimelate from (S)-tetrahydrodipicolinate (succinylase route): step 3/3. In terms of biological role, catalyzes the hydrolysis of N-succinyl-L,L-diaminopimelic acid (SDAP), forming succinate and LL-2,6-diaminopimelate (DAP), an intermediate involved in the bacterial biosynthesis of lysine and meso-diaminopimelic acid, an essential component of bacterial cell walls. The polypeptide is Succinyl-diaminopimelate desuccinylase (Neisseria meningitidis serogroup C / serotype 2a (strain ATCC 700532 / DSM 15464 / FAM18)).